Reading from the N-terminus, the 277-residue chain is ATP-dependent Clp protease proteolytic subunit, mitochondrial (277 aa).

Residues 1–56 (MWPGILVGGARVASCRYPALGPRLAAHFPAQRPPQRTLQNGLALQRCLHATATRAL) constitute a mitochondrion transit peptide. Catalysis depends on S153, which acts as the Nucleophile. H178 is an active-site residue. N6-succinyllysine is present on K200. K211 carries the N6-acetyllysine modification. The interval 246-277 (VHPPQDGEDEPTLVQKEPVEAAPAAEPVPAST) is disordered. A compositionally biased stretch (low complexity) spans 265–277 (EAAPAAEPVPAST).

Belongs to the peptidase S14 family. As to quaternary structure, fourteen CLPP subunits assemble into 2 heptameric rings which stack back to back to give a disk-like structure with a central cavity. Component of the ClpXP complex formed by the assembly of two CLPP heptameric rings with two CLPX hexameric rings, giving rise to a symmetrical structure with two central CLPP rings flanked by a CLPX ring at either end of the complex. As to expression, detected in liver (at protein level). Predominantly expressed in skeletal muscle. Intermediate levels in heart, liver and pancreas. Low in brain, placenta, lung and kidney.

Its subcellular location is the mitochondrion matrix. It catalyses the reaction Hydrolysis of proteins to small peptides in the presence of ATP and magnesium. alpha-casein is the usual test substrate. In the absence of ATP, only oligopeptides shorter than five residues are hydrolyzed (such as succinyl-Leu-Tyr-|-NHMec, and Leu-Tyr-Leu-|-Tyr-Trp, in which cleavage of the -Tyr-|-Leu- and -Tyr-|-Trp bonds also occurs).. Its function is as follows. Protease component of the ClpXP complex that cleaves peptides and various proteins in an ATP-dependent process. Has low peptidase activity in the absence of CLPX. The ClpXP complex can degrade CSN1S1, CSN2 and CSN3, as well as synthetic peptides (in vitro) and may be responsible for a fairly general and central housekeeping function rather than for the degradation of specific substrates. Cleaves PINK1 in the mitochondrion. This chain is ATP-dependent Clp protease proteolytic subunit, mitochondrial, found in Homo sapiens (Human).